The chain runs to 83 residues: Putative defensin-like protein 257 (83 aa).

Residues 1-25 (MMNVSLKLSFLVFILVIMSNLGSEA) form the signal peptide. 3 cysteine pairs are disulfide-bonded: Cys-57–Cys-73, Cys-63–Cys-80, and Cys-67–Cys-82.

The protein belongs to the DEFL family.

It is found in the secreted. In Arabidopsis thaliana (Mouse-ear cress), this protein is Putative defensin-like protein 257.